The sequence spans 89 residues: Small ribosomal subunit protein uS14 (89 aa).

Positions 32-51 are disordered; the sequence is DYEGLQKLPKNSSPVRLHNR.

Belongs to the universal ribosomal protein uS14 family. As to quaternary structure, part of the 30S ribosomal subunit. Contacts proteins S3 and S10.

In terms of biological role, binds 16S rRNA, required for the assembly of 30S particles and may also be responsible for determining the conformation of the 16S rRNA at the A site. The sequence is that of Small ribosomal subunit protein uS14 from Christiangramia forsetii (strain DSM 17595 / CGMCC 1.15422 / KT0803) (Gramella forsetii).